An 84-amino-acid chain; its full sequence is uncharacterized protein (84 aa).

Basic residues-rich tracts occupy residues 1–15 (MPPH…HGHH) and 67–84 (HHGH…GHFF). 2 disordered regions span residues 1–22 (MPPH…TYTT) and 64–84 (TSHH…GHFF).

This is an uncharacterized protein from Dictyostelium discoideum (Social amoeba).